We begin with the raw amino-acid sequence, 531 residues long: Polyamine transporter PUT1 (531 aa).

The tract at residues 1 to 76 (MADTGGRPEV…LPDGDAGGPM (76 aa)) is disordered. Positions 17-33 (SPGHPAASTTAAAAADL) are enriched in low complexity. Over residues 34-44 (GHADTGQEKPT) the composition is skewed to basic and acidic residues. 12 helical membrane-spanning segments follow: residues 83-103 (VSMIPLIFLIFYEVSGGPFGI), 113-133 (LLAIIGFLVLPVIWSIPEALI), 147-167 (YVVWVASALGPYWGFQQGWMK), 193-213 (LGGGAPRAFAVVGLTAVLTLL), 224-244 (VAICLGVFSLLPFFVMGLIAL), 262-284 (WNLYLNTLFWNLNYWDSISTLAG), 296-316 (ALFYAVIFVVVAYLYPLLAGT), 341-361 (AWLMWWVQSAAALSNMGMFVA), 391-411 (TPLAGILFSASGVLLLSMMSF), 414-434 (IVAAENFLYCFGMLLEFVAFI), 453-473 (TAGCVAMLVPPTALIAVVLAL), and 476-496 (LKVAVVSLGAVAMGLVLQPAL).

This sequence belongs to the amino acid-polyamine-organocation (APC) superfamily. Polyamine:cation symporter (PHS) (TC 2.A.3.12) family. In terms of tissue distribution, expressed in seedling roots, leaves, stems, flowers and siliques.

The protein resides in the cell membrane. In terms of biological role, cell membrane polyamine/proton symporter involved in the polyamine uptake in cells. Possesses high affinity for spermidine and lower affinity for spermine and putrescine. Transports paraquat, a polyamine analog, and thus confers sensitivity to this chemical which is used as a herbicide. The protein is Polyamine transporter PUT1 (PUT1) of Oryza sativa subsp. japonica (Rice).